The chain runs to 293 residues: Biphenyl-2,3-diol 1,2-dioxygenase (293 aa).

2 VOC domains span residues 5–119 and 143–265; these read RLGY…IYYG and GIGH…FGWG. H146, H210, and E261 together coordinate Fe cation.

Belongs to the extradiol ring-cleavage dioxygenase family. In terms of assembly, homooctamer. It depends on Fe(2+) as a cofactor.

The enzyme catalyses biphenyl-2,3-diol + O2 = 2-hydroxy-6-oxo-6-phenylhexa-2,4-dienoate + H(+). It functions in the pathway xenobiotic degradation; biphenyl degradation; 2-hydroxy-2,4-pentadienoate and benzoate from biphenyl: step 3/4. The sequence is that of Biphenyl-2,3-diol 1,2-dioxygenase (bphC) from Pseudomonas sp. (strain KKS102).